The chain runs to 234 residues: Probable chemoreceptor glutamine deamidase CheD 1 (234 aa).

Positions 183–234 are disordered; that stretch reads AREAAGPRGERAARARPRVELFGTPAPKAQATPRIELFGTRATQPATRKQEA. The span at 190–201 shows a compositional bias: basic and acidic residues; it reads RGERAARARPRV. Residues 223-234 show a composition bias toward polar residues; it reads RATQPATRKQEA.

This sequence belongs to the CheD family.

It catalyses the reaction L-glutaminyl-[protein] + H2O = L-glutamyl-[protein] + NH4(+). Probably deamidates glutamine residues to glutamate on methyl-accepting chemotaxis receptors (MCPs), playing an important role in chemotaxis. This chain is Probable chemoreceptor glutamine deamidase CheD 1, found in Burkholderia thailandensis (strain ATCC 700388 / DSM 13276 / CCUG 48851 / CIP 106301 / E264).